The chain runs to 209 residues: N-(5'-phosphoribosyl)anthranilate isomerase (209 aa).

Belongs to the TrpF family.

It carries out the reaction N-(5-phospho-beta-D-ribosyl)anthranilate = 1-(2-carboxyphenylamino)-1-deoxy-D-ribulose 5-phosphate. The protein operates within amino-acid biosynthesis; L-tryptophan biosynthesis; L-tryptophan from chorismate: step 3/5. The chain is N-(5'-phosphoribosyl)anthranilate isomerase from Staphylococcus carnosus (strain TM300).